Here is a 372-residue protein sequence, read N- to C-terminus: F-box/kelch-repeat protein At5g49000 (372 aa).

Residues 1 to 11 (MSSPERKRKKR) are compositionally biased toward basic residues. The interval 1–24 (MSSPERKRKKRSLEPSPESTPNPS) is disordered. Residues 19–65 (STPNPSLPDDLIVSILARVSRLYYPILSLVSKSSRTLVTSPELYKTR) enclose the F-box domain. Kelch repeat units follow at residues 131–177 (NIYA…VVDG), 179–224 (IYVA…VIEG), 226–271 (IYIF…LYCY), and 273–312 (PGGI…GGKM).

The protein is F-box/kelch-repeat protein At5g49000 of Arabidopsis thaliana (Mouse-ear cress).